The following is a 42-amino-acid chain: Pollen allergen Sal k 1 (42 aa).

This Kali turgidum (Prickly saltwort) protein is Pollen allergen Sal k 1.